We begin with the raw amino-acid sequence, 1093 residues long: Probable phosphorylase b kinase regulatory subunit beta (1093 aa).

The tract at residues 1–27 is disordered; sequence MRDVPKSLGLSVTTPGGSSGAPDSGRH. 3 calmodulin-binding regions span residues 6-27, 751-778, and 905-936; these read KSLG…SGRH, QLYH…IVDS, and EKLT…ILQR. Residue Cys1090 is the site of S-farnesyl cysteine attachment.

It belongs to the phosphorylase b kinase regulatory chain family. In terms of processing, although the final Cys may be farnesylated, the terminal tripeptide is probably not removed, and the C-terminus is not methylated.

The protein resides in the cell membrane. The protein operates within glycan biosynthesis; glycogen metabolism. Its function is as follows. Phosphorylase b kinase catalyzes the phosphorylation of serine in certain substrates, including troponin I. The beta chain acts as a regulatory unit and modulates the activity of the holoenzyme in response to phosphorylation. The sequence is that of Probable phosphorylase b kinase regulatory subunit beta from Drosophila melanogaster (Fruit fly).